Consider the following 278-residue polypeptide: Large ribosomal subunit protein uL2 (278 aa).

Disordered stretches follow at residues 28–56 (KPVK…GIAG) and 221–278 (RGVA…KKKR). Basic residues predominate over residues 269–278 (IRSRHAKKKR).

The protein belongs to the universal ribosomal protein uL2 family. Part of the 50S ribosomal subunit. Forms a bridge to the 30S subunit in the 70S ribosome.

In terms of biological role, one of the primary rRNA binding proteins. Required for association of the 30S and 50S subunits to form the 70S ribosome, for tRNA binding and peptide bond formation. It has been suggested to have peptidyltransferase activity; this is somewhat controversial. Makes several contacts with the 16S rRNA in the 70S ribosome. The polypeptide is Large ribosomal subunit protein uL2 (Rhizorhabdus wittichii (strain DSM 6014 / CCUG 31198 / JCM 15750 / NBRC 105917 / EY 4224 / RW1) (Sphingomonas wittichii)).